A 341-amino-acid chain; its full sequence is Cobalt-precorrin-5B C(1)-methyltransferase (341 aa).

It belongs to the CbiD family.

The enzyme catalyses Co-precorrin-5B + S-adenosyl-L-methionine = Co-precorrin-6A + S-adenosyl-L-homocysteine. It functions in the pathway cofactor biosynthesis; adenosylcobalamin biosynthesis; cob(II)yrinate a,c-diamide from sirohydrochlorin (anaerobic route): step 6/10. Functionally, catalyzes the methylation of C-1 in cobalt-precorrin-5B to form cobalt-precorrin-6A. The sequence is that of Cobalt-precorrin-5B C(1)-methyltransferase from Picrophilus torridus (strain ATCC 700027 / DSM 9790 / JCM 10055 / NBRC 100828 / KAW 2/3).